The sequence spans 367 residues: Quinolinate synthase (367 aa).

Positions 45 and 62 each coordinate iminosuccinate. Position 109 (Cys-109) interacts with [4Fe-4S] cluster. Iminosuccinate is bound by residues 140-142 (YVN) and Ser-161. [4Fe-4S] cluster is bound at residue Cys-229. Iminosuccinate is bound by residues 255-257 (HPE) and Thr-272. Cys-319 contacts [4Fe-4S] cluster.

The protein belongs to the quinolinate synthase family. Type 3 subfamily. [4Fe-4S] cluster is required as a cofactor.

Its subcellular location is the cytoplasm. It catalyses the reaction iminosuccinate + dihydroxyacetone phosphate = quinolinate + phosphate + 2 H2O + H(+). The protein operates within cofactor biosynthesis; NAD(+) biosynthesis; quinolinate from iminoaspartate: step 1/1. In terms of biological role, catalyzes the condensation of iminoaspartate with dihydroxyacetone phosphate to form quinolinate. The sequence is that of Quinolinate synthase from Geobacillus sp. (strain WCH70).